The primary structure comprises 141 residues: Nucleoside triphosphatase NudI (141 aa).

The Nudix hydrolase domain occupies Met-1 to Leu-141. The Nudix box signature appears at Gly-38–Gly-59.

The protein belongs to the Nudix hydrolase family. NudI subfamily. In terms of assembly, monomer. Mg(2+) is required as a cofactor.

It carries out the reaction a ribonucleoside 5'-triphosphate + H2O = a ribonucleoside 5'-phosphate + diphosphate + H(+). The catalysed reaction is a 2'-deoxyribonucleoside 5'-triphosphate + H2O = a 2'-deoxyribonucleoside 5'-phosphate + diphosphate + H(+). It catalyses the reaction dUTP + H2O = dUMP + diphosphate + H(+). The enzyme catalyses dTTP + H2O = dTMP + diphosphate + H(+). It carries out the reaction dCTP + H2O = dCMP + diphosphate + H(+). In terms of biological role, catalyzes the hydrolysis of nucleoside triphosphates, with a preference for pyrimidine deoxynucleoside triphosphates (dUTP, dTTP and dCTP). The protein is Nucleoside triphosphatase NudI of Salmonella newport (strain SL254).